The following is a 205-amino-acid chain: MIGKLKGVIDSYGEDYVILDVQGVGYLVHCATRTLQALPSSGEAAVLSIETYVREDQIKLFGFRSDIEREWFRLLQTVQGVGAKVALAVLSTLPPSDLANAIALRDKAAVARTPGVGPKVAERIVTELKDKAPAFANVDPAVVHLAGAVDDDRAPRPVKDAISALVNLGYGQPQAAAAIASVARDAGEGAETAQLIRLGLKELAK.

A domain I region spans residues 1 to 64; it reads MIGKLKGVID…EDQIKLFGFR (64 aa). The segment at 65–143 is domain II; the sequence is SDIEREWFRL…AFANVDPAVV (79 aa). The interval 144-154 is flexible linker; that stretch reads HLAGAVDDDRA. The tract at residues 154 to 205 is domain III; the sequence is APRPVKDAISALVNLGYGQPQAAAAIASVARDAGEGAETAQLIRLGLKELAK.

The protein belongs to the RuvA family. As to quaternary structure, homotetramer. Forms an RuvA(8)-RuvB(12)-Holliday junction (HJ) complex. HJ DNA is sandwiched between 2 RuvA tetramers; dsDNA enters through RuvA and exits via RuvB. An RuvB hexamer assembles on each DNA strand where it exits the tetramer. Each RuvB hexamer is contacted by two RuvA subunits (via domain III) on 2 adjacent RuvB subunits; this complex drives branch migration. In the full resolvosome a probable DNA-RuvA(4)-RuvB(12)-RuvC(2) complex forms which resolves the HJ.

It localises to the cytoplasm. Its function is as follows. The RuvA-RuvB-RuvC complex processes Holliday junction (HJ) DNA during genetic recombination and DNA repair, while the RuvA-RuvB complex plays an important role in the rescue of blocked DNA replication forks via replication fork reversal (RFR). RuvA specifically binds to HJ cruciform DNA, conferring on it an open structure. The RuvB hexamer acts as an ATP-dependent pump, pulling dsDNA into and through the RuvAB complex. HJ branch migration allows RuvC to scan DNA until it finds its consensus sequence, where it cleaves and resolves the cruciform DNA. This chain is Holliday junction branch migration complex subunit RuvA, found in Afipia carboxidovorans (strain ATCC 49405 / DSM 1227 / KCTC 32145 / OM5) (Oligotropha carboxidovorans).